Reading from the N-terminus, the 127-residue chain is Riboflavin kinase (127 aa).

Residue 10 to 15 (GLGEGR) participates in CDP binding. Mg(2+) contacts are provided by T39 and N41. 2 residues coordinate FMN: T96 and E104. 109-112 (VHLR) lines the CDP pocket.

It belongs to the archaeal riboflavin kinase family. It depends on Mg(2+) as a cofactor.

It catalyses the reaction riboflavin + CTP = CDP + FMN + H(+). The protein operates within cofactor biosynthesis; FMN biosynthesis; FMN from riboflavin (CTP route): step 1/1. Functionally, catalyzes the CTP-dependent phosphorylation of riboflavin (vitamin B2) to form flavin mononucleotide (FMN). The protein is Riboflavin kinase of Methanococcus maripaludis (strain C7 / ATCC BAA-1331).